Here is a 289-residue protein sequence, read N- to C-terminus: MAEISAKAVKDLRDKTGVGMMECKKALQETDGDMEKAVEFLRKRGAAMAAKRADREAKEGVIAVKTTEDSRNGVIVEVNCETDFVARGEDFTKFAEAISEIALANFPENKEALLALSMGDDYQGQTVEQAIEAMTGKIGEKIEISKVGVITSNDSVVTAYVHPGAKLATLVEIGPASTDEVEDLSKDVAMQIAAAAPLVVDRSAVPQEKLAQEAEIYKQQALREGKPEKFVEKIVTGRIEKYYQDVVLLEQAFIKDSSKTVSDVVKETSKRLNKTIEIRCFLRYQLGEK.

Residues 82-85 (TDFV) are involved in Mg(2+) ion dislocation from EF-Tu.

Belongs to the EF-Ts family.

Its subcellular location is the cytoplasm. Associates with the EF-Tu.GDP complex and induces the exchange of GDP to GTP. It remains bound to the aminoacyl-tRNA.EF-Tu.GTP complex up to the GTP hydrolysis stage on the ribosome. The chain is Elongation factor Ts from Chloroherpeton thalassium (strain ATCC 35110 / GB-78).